Reading from the N-terminus, the 487-residue chain is MASTADGDMGETLEQMRGLWPGVEDLSLNKLATSLGASEQALRLIFSIFLGYPLALFYRHYLFYKDSYLIHLFHTFTGLSIAYFNFGHQFYHSLLCVVLQFLILRLMGRTVTAVITTLCFQMAYLLAGYYYTATGDYDIKWTMPHCVLTLKLIGLCIDYYDGGKDGNSLTSEQQKYAIRGVPSLLEVAGFSYFYGAFLVGPQFSMNHYMKLVRGQLTDIPGKMPNSTIPALKRLSLGLVYLVGYTLLSPHITDDYLLTEDYDNRPFWFRCMYMLIWGKFVLYKYVTCWLVTEGVCILSGLGFNGFDENGTVRWDACANMKVWLFETTPRFNGTIASFNINTNAWVARYIFKRLKFLGNKELSQGLSLLFLALWHGLHSGYLICFQMEFLIVIVEKQVSSLIRDSPALSSLASITALQPFYYLVQQTIHWLFMGYSMTAFCLFTWDKWLKVYRSIYFLGHVFFLSLLFILPYIHKAMVPRKEKLKKRE.

Ala2 carries the N-acetylalanine modification. Transmembrane regions (helical) follow at residues 44 to 64 (LIFSIFLGYPLALFYRHYLFY), 84 to 104 (FNFGHQFYHSLLCVVLQFLIL), 111 to 131 (VTAVITTLCFQMAYLLAGYYY), and 180 to 200 (GVPSLLEVAGFSYFYGAFLVG). N-linked (GlcNAc...) asparagine glycosylation occurs at Asn225. The next 2 helical transmembrane spans lie at 236–256 (LGLVYLVGYTLLSPHITDDYL) and 285–305 (VTCWLVTEGVCILSGLGFNGF). N-linked (GlcNAc...) asparagine glycans are attached at residues Asn308 and Asn331. Residues Asn338 and His374 contribute to the active site. The next 3 membrane-spanning stretches (helical) occupy residues 364–384 (GLSLLFLALWHGLHSGYLICF), 422–442 (LVQQTIHWLFMGYSMTAFCLF), and 453–473 (SIYFLGHVFFLSLLFILPYIH). Residues 484–487 (KKRE) carry the Di-lysine motif motif.

Belongs to the membrane-bound acyltransferase family. Detected ubiquitously, with high expression levels in small intestine, brown adipose tissue, liver, kidney and testis. Expressed in liver and both proximal and distal small intestine (at protein level). Expressed in peritoneal macrophages.

It localises to the endoplasmic reticulum membrane. The enzyme catalyses a 1-acyl-sn-glycero-3-phosphocholine + an acyl-CoA = a 1,2-diacyl-sn-glycero-3-phosphocholine + CoA. It carries out the reaction a 1-acyl-sn-glycero-3-phosphoethanolamine + an acyl-CoA = a 1,2-diacyl-sn-glycero-3-phosphoethanolamine + CoA. It catalyses the reaction a 1-acyl-sn-glycero-3-phospho-L-serine + an acyl-CoA = a 1,2-diacyl-sn-glycero-3-phospho-L-serine + CoA. The catalysed reaction is (9Z,12Z)-octadecadienoyl-CoA + a 1-acyl-sn-glycero-3-phosphocholine = 1-acyl-2-(9Z,12Z)-octadecadienoyl-sn-glycero-3-phosphocholine + CoA. The enzyme catalyses (5Z,8Z,11Z,14Z)-eicosatetraenoyl-CoA + a 1-acyl-sn-glycero-3-phosphocholine = 1-acyl-2-(5Z,8Z,11Z,14Z-eicosatetraenoyl)-sn-glycero-3-phosphocholine + CoA. It carries out the reaction dodecanoyl-CoA + 1-hexadecanoyl-sn-glycero-3-phosphocholine = 1-hexadecanoyl-2-dodecanoyl-sn-glycero-3-phosphocholine + CoA. It catalyses the reaction octadecanoyl-CoA + 1-hexadecanoyl-sn-glycero-3-phosphocholine = 1-hexadecanoyl-2-octadecanoyl-sn-glycero-3-phosphocholine + CoA. The catalysed reaction is 1-dodecanoyl-sn-glycero-3-phosphocholine + hexadecanoyl-CoA = 1-dodecanoyl-2-hexadecanoyl-sn-glycero-3-phosphocholine + CoA. The enzyme catalyses 1-tetradecanoyl-sn-glycero-3-phosphocholine + hexadecanoyl-CoA = 1-tetradecanoyl-2-hexadecanoyl-sn-glycero-3-phosphocholine + CoA. It carries out the reaction 1-hexadecanoyl-sn-glycero-3-phosphocholine + hexadecanoyl-CoA = 1,2-dihexadecanoyl-sn-glycero-3-phosphocholine + CoA. It catalyses the reaction 1-octadecanoyl-sn-glycero-3-phosphocholine + hexadecanoyl-CoA = 1-octadecanoyl-2-hexadecanoyl-sn-glycero-3-phosphocholine + CoA. The catalysed reaction is 1-(9Z-octadecenoyl)-sn-glycero-3-phosphocholine + hexadecanoyl-CoA = 1-(9Z-octadecenoyl)-2-hexadecanoyl-sn-glycero-3-phosphocholine + CoA. The enzyme catalyses (9Z)-hexadecenoyl-CoA + 1-hexadecanoyl-sn-glycero-3-phosphocholine = 1-hexadecanoyl-2-(9Z-hexadecenoyl)-sn-glycero-3-phosphocholine + CoA. It carries out the reaction 1-hexadecanoyl-sn-glycero-3-phosphocholine + (9Z)-octadecenoyl-CoA = 1-hexadecanoyl-2-(9Z-octadecenoyl)-sn-glycero-3-phosphocholine + CoA. It catalyses the reaction (9Z,12Z)-octadecadienoyl-CoA + 1-hexadecanoyl-sn-glycero-3-phosphocholine = 1-hexadecanoyl-2-(9Z,12Z-octadecadienoyl)-sn-glycero-3-phosphocholine + CoA. The catalysed reaction is 1-dodecanoyl-sn-glycero-3-phosphocholine + (5Z,8Z,11Z,14Z)-eicosatetraenoyl-CoA = 1-dodecanoyl-2-(5Z,8Z,11Z,14Z)-eicosatetraenoyl-sn-glycero-3-phosphocholine + CoA. The enzyme catalyses (5Z,8Z,11Z,14Z)-eicosatetraenoyl-CoA + 1-hexadecanoyl-sn-glycero-3-phosphocholine = 1-hexadecanoyl-2-(5Z,8Z,11Z,14Z-eicosatetraenoyl)-sn-glycero-3-phosphocholine + CoA. It carries out the reaction 1-octadecanoyl-sn-glycero-3-phosphocholine + (5Z,8Z,11Z,14Z)-eicosatetraenoyl-CoA = 1-octadecanoyl-2-(5Z,8Z,11Z,14Z-eicosatetraenoyl)-sn-glycero-3-phosphocholine + CoA. It catalyses the reaction 1-eicosanoyl-sn-glycero-3-phosphocholine + (5Z,8Z,11Z,14Z)-eicosatetraenoyl-CoA = 1-eicosanoyl-2-(5Z,8Z,11Z,14Z)-eicosatetraenoyl-sn-glycero-3-phosphocholine + CoA. The catalysed reaction is 1-(9Z-octadecenoyl)-sn-glycero-3-phosphocholine + (9Z)-octadecenoyl-CoA = 1,2-di-(9Z-octadecenoyl)-sn-glycero-3-phosphocholine + CoA. The enzyme catalyses 1-(9Z-octadecenoyl)-sn-glycero-3-phosphocholine + (9Z,12Z)-octadecadienoyl-CoA = 1-(9Z)-octadecenoyl-2-(9Z,12Z)-octadecadienoyl-sn-glycero-3-phosphocholine + CoA. It carries out the reaction 1-(9Z-octadecenoyl)-sn-glycero-3-phosphocholine + (5Z,8Z,11Z,14Z)-eicosatetraenoyl-CoA = 1-(9Z)-octadecenoyl-2-(5Z,8Z,11Z,14Z)-icosatetraenoyl-sn-glycero-3-phosphocholine + CoA. It catalyses the reaction a 1-acyl-sn-glycero-3-phosphoethanolamine + (9Z,12Z)-octadecadienoyl-CoA = 1-acyl-2-(9Z,12Z)-octadecadienoyl-sn-glycero-3-phosphoethanolamine + CoA. The catalysed reaction is 1-(9Z-octadecenoyl)-sn-glycero-3-phosphoethanolamine + (9Z,12Z)-octadecadienoyl-CoA = 1-(9Z)-octadecenoyl-2-(9Z,12Z)-octadecadienoyl-sn-glycero-3-phosphoethanolamine + CoA. The enzyme catalyses 1-(10Z-heptadecenoyl)-sn-glycero-3-phosphoethanolamine + (9Z,12Z)-octadecadienoyl-CoA = 1-(10Z-heptadecenoyl)-2-(9Z,12Z-octadecadienoyl)-sn-glycero-3-phosphoethanolamine + CoA. It carries out the reaction a 1-acyl-sn-glycero-3-phosphoethanolamine + (5Z,8Z,11Z,14Z)-eicosatetraenoyl-CoA = 1-acyl-2-(5Z,8Z,11Z,14Z)-eicosatetraenoyl-sn-glycero-3-phosphoethanolamine + CoA. It catalyses the reaction 1-hexadecanoyl-sn-glycero-3-phosphoethanolamine + (5Z,8Z,11Z,14Z)-eicosatetraenoyl-CoA = 1-hexadecanoyl-2-(5Z,8Z,11Z,14Z-eicosatetraenoyl)-sn-glycero-3-phosphoethanolamine + CoA. The catalysed reaction is 1-(9Z-octadecenoyl)-sn-glycero-3-phosphoethanolamine + (5Z,8Z,11Z,14Z)-eicosatetraenoyl-CoA = 1-(9Z)-octadecenoyl-2-(5Z,8Z,11Z,14Z)-eicosatetraenoyl-sn-glycero-3-phosphoethanolamine + CoA. The enzyme catalyses 1-(10Z-heptadecenoyl)-sn-glycero-3-phosphoethanolamine + (5Z,8Z,11Z,14Z)-eicosatetraenoyl-CoA = 1-(10Z-heptadecenoyl)-2-(5Z,8Z,11Z,14Z-eicosatetraenoyl)-sn-glycero-3-phosphoethanolamine + CoA. It carries out the reaction a 1-O-(1Z-alkenyl)-sn-glycero-3-phosphoethanolamine + (5Z,8Z,11Z,14Z)-eicosatetraenoyl-CoA = 1-O-(1Z)-alkenyl-2-(5Z,8Z,11Z,14Z)-eicosatetraenoyl-sn-glycero-3-phosphoethanolamine + CoA. It catalyses the reaction a 1-acyl-sn-glycero-3-phospho-L-serine + (9Z,12Z)-octadecadienoyl-CoA = 1-acyl-2-(9Z,12Z-octadecadienoyl)-sn-glycero-3-phospho-L-serine + CoA. The catalysed reaction is a 1-acyl-sn-glycero-3-phospho-L-serine + (5Z,8Z,11Z,14Z)-eicosatetraenoyl-CoA = 1-acyl-2-(5Z,8Z,11Z,14Z-eicosatetraenoyl)-sn-glycero-3-phospho-L-serine + CoA. The enzyme catalyses 1-hexadecanoyl-sn-glycero-3-phospho-L-serine + (9Z)-octadecenoyl-CoA = 1-hexadecanoyl-2-(9Z-octadecenoyl)-sn-glycero-3-phospho-L-serine + CoA. It carries out the reaction 1-(9Z-octadecenoyl)-sn-glycero-3-phospho-L-serine + (9Z)-octadecenoyl-CoA = 1,2-di-(9Z)-octadecenoyl-sn-glycero-3-phospho-L-serine + CoA. It catalyses the reaction 1-hexadecanoyl-sn-glycero-3-phospho-L-serine + (9Z,12Z)-octadecadienoyl-CoA = 1-hexadecanoyl-2-(9Z,12Z-octadecadienoyl)-sn-glycero-3-phospho-L-serine + CoA. The catalysed reaction is 1-(9Z-octadecenoyl)-sn-glycero-3-phospho-L-serine + (9Z,12Z)-octadecadienoyl-CoA = 1-(9Z-octadecenoyl)-2-(9Z,12Z-octadienoyl)-sn-glycero-3-phospho-L-serine + CoA. The enzyme catalyses 1-hexadecanoyl-sn-glycero-3-phospho-L-serine + (5Z,8Z,11Z,14Z)-eicosatetraenoyl-CoA = 1-hexadecanoyl-2-(5Z,8Z,11Z,14Z-eicosatetraenoyl)-sn-glycero-3-phospho-L-serine + CoA. It carries out the reaction 1-(9Z-octadecenoyl)-sn-glycero-3-phospho-L-serine + (5Z,8Z,11Z,14Z)-eicosatetraenoyl-CoA = 1-(9Z-octadecenoyl)-2-(5Z,8Z,11Z,14Z-eicosatetraenoyl)-sn-glycero-3-phospho-L-serine + CoA. It participates in lipid metabolism; phospholipid metabolism. Its function is as follows. Lysophospholipid O-acyltransferase (LPLAT) that catalyzes the reacylation step of the phospholipid remodeling process also known as the Lands cycle. Catalyzes transfer of the fatty acyl chain from fatty acyl-CoA to 1-acyl lysophospholipid to form various classes of phospholipids. Converts 1-acyl lysophosphatidylcholine (LPC) into phosphatidylcholine (PC) (LPCAT activity), 1-acyl lysophosphatidylserine (LPS) into phosphatidylserine (PS) (LPSAT activity) and 1-acyl lysophosphatidylethanolamine (LPE) into phosphatidylethanolamine (PE) (LPEAT activity). Favors polyunsaturated fatty acyl-CoAs as acyl donors compared to saturated fatty acyl-CoAs. Has higher activity for LPC acyl acceptors compared to LPEs and LPSs. Can also transfer the fatty acyl chain from fatty acyl-CoA to 1-O-alkyl lysophospholipid or 1-O-alkenyl lysophospholipid with lower efficiency. Acts as a major LPC O-acyltransferase in liver and intestine. As a component of the liver X receptor/NR1H3 or NR1H2 signaling pathway, mainly catalyzes the incorporation of arachidonate into PCs of endoplasmic reticulum (ER) membranes, increasing membrane dynamics and enabling triacylglycerols transfer to nascent very low-density lipoprotein (VLDL) particles. Promotes processing of sterol regulatory protein SREBF1 in hepatocytes, likely by facilitating the translocation of SREBF1-SCAP complex from ER to the Golgi apparatus. Participates in mechanisms by which the liver X receptor/NR1H3 or NR1H2 signaling pathway counteracts lipid-induced ER stress response and inflammation. Down-regulates hepatic inflammation by limiting arachidonic acid availability for synthesis of inflammatory eicosanoids, such as prostaglandins. In enterocytes, acts as a component of a gut-brain feedback loop that coordinates dietary lipid absorption and food intake. Regulates the abundance of PCs containing linoleate and arachidonate in enterocyte membranes, enabling passive diffusion of fatty acids and cholesterol across the membrane for efficient chylomicron assembly. In the intestinal crypt, acts as a component of dietary-responsive phospholipid-cholesterol axis, regulating the biosynthesis of cholesterol and its mitogenic effects on intestinal stem cells. The chain is Lysophospholipid acyltransferase 5 (Lpcat3) from Mus musculus (Mouse).